We begin with the raw amino-acid sequence, 236 residues long: Small ribosomal subunit protein uS2c (236 aa).

This sequence belongs to the universal ribosomal protein uS2 family.

The protein resides in the plastid. The protein is Small ribosomal subunit protein uS2c (rps2) of Cuscuta obtusiflora (Peruvian dodder).